Here is a 369-residue protein sequence, read N- to C-terminus: Anhydro-N-acetylmuramic acid kinase (369 aa).

Residue 12–19 (GTSLDGVD) participates in ATP binding.

It belongs to the anhydro-N-acetylmuramic acid kinase family.

It carries out the reaction 1,6-anhydro-N-acetyl-beta-muramate + ATP + H2O = N-acetyl-D-muramate 6-phosphate + ADP + H(+). It participates in amino-sugar metabolism; 1,6-anhydro-N-acetylmuramate degradation. Its pathway is cell wall biogenesis; peptidoglycan recycling. In terms of biological role, catalyzes the specific phosphorylation of 1,6-anhydro-N-acetylmuramic acid (anhMurNAc) with the simultaneous cleavage of the 1,6-anhydro ring, generating MurNAc-6-P. Is required for the utilization of anhMurNAc either imported from the medium or derived from its own cell wall murein, and thus plays a role in cell wall recycling. This chain is Anhydro-N-acetylmuramic acid kinase, found in Escherichia coli O7:K1 (strain IAI39 / ExPEC).